We begin with the raw amino-acid sequence, 280 residues long: Phosphatidylserine decarboxylase proenzyme (280 aa).

Active-site charge relay system; for autoendoproteolytic cleavage activity residues include Asp-88, His-144, and Ser-247. The active-site Schiff-base intermediate with substrate; via pyruvic acid; for decarboxylase activity is Ser-247. The residue at position 247 (Ser-247) is a Pyruvic acid (Ser); by autocatalysis.

It belongs to the phosphatidylserine decarboxylase family. PSD-B subfamily. Prokaryotic type I sub-subfamily. In terms of assembly, heterodimer of a large membrane-associated beta subunit and a small pyruvoyl-containing alpha subunit. Requires pyruvate as cofactor. Is synthesized initially as an inactive proenzyme. Formation of the active enzyme involves a self-maturation process in which the active site pyruvoyl group is generated from an internal serine residue via an autocatalytic post-translational modification. Two non-identical subunits are generated from the proenzyme in this reaction, and the pyruvate is formed at the N-terminus of the alpha chain, which is derived from the carboxyl end of the proenzyme. The autoendoproteolytic cleavage occurs by a canonical serine protease mechanism, in which the side chain hydroxyl group of the serine supplies its oxygen atom to form the C-terminus of the beta chain, while the remainder of the serine residue undergoes an oxidative deamination to produce ammonia and the pyruvoyl prosthetic group on the alpha chain. During this reaction, the Ser that is part of the protease active site of the proenzyme becomes the pyruvoyl prosthetic group, which constitutes an essential element of the active site of the mature decarboxylase.

The protein localises to the cell membrane. It catalyses the reaction a 1,2-diacyl-sn-glycero-3-phospho-L-serine + H(+) = a 1,2-diacyl-sn-glycero-3-phosphoethanolamine + CO2. It participates in phospholipid metabolism; phosphatidylethanolamine biosynthesis; phosphatidylethanolamine from CDP-diacylglycerol: step 2/2. Its function is as follows. Catalyzes the formation of phosphatidylethanolamine (PtdEtn) from phosphatidylserine (PtdSer). The polypeptide is Phosphatidylserine decarboxylase proenzyme (Stenotrophomonas maltophilia (strain R551-3)).